Here is a 151-residue protein sequence, read N- to C-terminus: Deoxyuridine 5'-triphosphate nucleotidohydrolase (151 aa).

Residues 70–72 (RSG), N83, 87–89 (LID), and M97 contribute to the substrate site.

It belongs to the dUTPase family. Requires Mg(2+) as cofactor.

It catalyses the reaction dUTP + H2O = dUMP + diphosphate + H(+). The protein operates within pyrimidine metabolism; dUMP biosynthesis; dUMP from dCTP (dUTP route): step 2/2. Functionally, this enzyme is involved in nucleotide metabolism: it produces dUMP, the immediate precursor of thymidine nucleotides and it decreases the intracellular concentration of dUTP so that uracil cannot be incorporated into DNA. The sequence is that of Deoxyuridine 5'-triphosphate nucleotidohydrolase from Psychromonas ingrahamii (strain DSM 17664 / CCUG 51855 / 37).